The primary structure comprises 251 residues: Haloacid dehalogenase-like hydrolase domain-containing protein 3 (251 aa).

Lys-15 is subject to N6-acetyllysine; alternate. Lys-15 is subject to N6-succinyllysine; alternate.

The protein belongs to the HAD-like hydrolase superfamily.

The sequence is that of Haloacid dehalogenase-like hydrolase domain-containing protein 3 (HDHD3) from Homo sapiens (Human).